The following is a 115-amino-acid chain: Delta-hexatoxin-Hi1a (115 aa).

An N-terminal signal peptide occupies residues 1 to 18 (MKVIATLYGLLFLTVVLG). Residues 19 to 73 (DITEGNENDLVENFREELSEADIPLLKKLEAIEDALLEKDFLPYEEEDRNARPKR) constitute a propeptide that is removed on maturation. Cystine bridges form between Cys74–Cys88, Cys81–Cys93, Cys87–Cys104, and Cys89–Cys115.

It belongs to the neurotoxin 06 (delta-actx) family. As to expression, expressed by the venom gland.

The protein resides in the secreted. Neurotoxin that slows inactivation of voltage-gated sodium channels (Nav). In vivo, is lethal to both vertebrates and insects. In Hadronyche infensa (Fraser island funnel-web spider), this protein is Delta-hexatoxin-Hi1a.